Here is a 248-residue protein sequence, read N- to C-terminus: ATP synthase subunit a (248 aa).

The next 7 helical transmembrane spans lie at 29 to 49 (AMLTTCVSLSFFLFLFYCLFS), 85 to 105 (VFPFLFVIFSFILISNVQGLV), 115 to 135 (LIQTMVLALTVFIGVIIIVLA), 143 to 163 (LFLPGGTSIVLAFLLVPIEIV), 176 to 196 (LFANMMAGHTLLKVIAAVAWA), 201 to 221 (GGLLLIAHIVPLGVLVILFGL), and 227 to 247 (LIQAYVFTILSCIYINDAIVL).

Belongs to the ATPase A chain family. In terms of assembly, F-type ATPases have 2 components, CF(1) - the catalytic core - and CF(0) - the membrane proton channel. CF(1) has five subunits: alpha(3), beta(3), gamma(1), delta(1), epsilon(1). CF(0) has three main subunits: a, b and c.

The protein localises to the mitochondrion inner membrane. Functionally, mitochondrial membrane ATP synthase (F(1)F(0) ATP synthase or Complex V) produces ATP from ADP in the presence of a proton gradient across the membrane which is generated by electron transport complexes of the respiratory chain. F-type ATPases consist of two structural domains, F(1) - containing the extramembraneous catalytic core and F(0) - containing the membrane proton channel, linked together by a central stalk and a peripheral stalk. During catalysis, ATP synthesis in the catalytic domain of F(1) is coupled via a rotary mechanism of the central stalk subunits to proton translocation. Key component of the proton channel; it may play a direct role in the translocation of protons across the membrane. This Pylaiella littoralis (Seaweed) protein is ATP synthase subunit a (ATP6).